The primary structure comprises 120 residues: Protein BEX4 (120 aa).

Positions 1–54 (MESKEELAANNLNGENAQQENEGGEQAPTQNEEESRHLGGGEGQKPGGNIRRGR) are disordered. Positions 8–27 (AANNLNGENAQQENEGGEQA) are enriched in low complexity. The segment at 31-90 (NEEESRHLGGGEGQKPGGNIRRGRVRRLVPNFRWAIPNRHIEHNEARDDVERFVGQMMEI) is interaction with SIRT2. Residues 31-120 (NEEESRHLGG…DNHYDFCLIP (90 aa)) form an interaction with alpha-tubulin region. C117 serves as a coordination point for Zn(2+).

This sequence belongs to the BEX family. In terms of assembly, interacts with alpha-tubulin. Interacts with SIRT2. In terms of processing, ubiquitinated and degraded by the proteasome. As to expression, very high expression in heart, skeletal muscle, liver, and kidney. The levels of expression are uniform throughout the brain.

It localises to the cytoplasm. The protein resides in the cytoskeleton. It is found in the spindle pole. The protein localises to the nucleus. Functionally, may play a role in microtubule deacetylation by negatively regulating the SIRT2 deacetylase activity toward alpha-tubulin and thereby participate in the control of cell cycle progression and genomic stability. In absence of reductive stress, acts as a pseudosubstrate for the CRL2(FEM1B) complex: associates with FEM1B via zinc, thereby preventing association between FEM1B and its substrates. In Homo sapiens (Human), this protein is Protein BEX4.